Reading from the N-terminus, the 661-residue chain is Solute carrier organic anion transporter family member 1A4 (661 aa).

The Cytoplasmic portion of the chain corresponds to Met-1–Lys-20. Residues Met-21 to Met-40 traverse the membrane as a helical segment. The Extracellular segment spans residues Asn-41 to Gly-59. Residues Leu-60 to Gly-80 form a helical membrane-spanning segment. Residues Thr-81–Pro-86 lie on the Cytoplasmic side of the membrane. A helical transmembrane segment spans residues Ile-87–Gly-111. Residues Gln-112–Ser-154 are Extracellular-facing. Asn-123 and Asn-134 each carry an N-linked (GlcNAc...) asparagine glycan. Residues Leu-155–Glu-183 traverse the membrane as a helical segment. Residues Asp-184 to Met-202 lie on the Cytoplasmic side of the membrane. The helical transmembrane segment at Thr-203–Ile-223 threads the bilayer. At Glu-224 to Val-241 the chain is on the extracellular side. Residues Gly-242–Pro-266 traverse the membrane as a helical segment. At Lys-267–Ser-310 the chain is on the cytoplasmic side. Residues Leu-311–Ile-332 form a helical membrane-spanning segment. Over Asn-333 to Glu-352 the chain is Extracellular. The chain crosses the membrane as a helical span at residues Val-353–Met-376. Topologically, residues Lys-377 to Lys-380 are cytoplasmic. A helical membrane pass occupies residues Val-381–Ser-404. The Extracellular portion of the chain corresponds to Tyr-405 to Phe-512. The Kazal-like domain occupies Asn-432–Gln-487. 3 disulfide bridges follow: Cys-438-Cys-468, Cys-444-Cys-464, and Cys-453-Cys-485. An N-linked (GlcNAc...) asparagine glycan is attached at Asn-443. Asn-482 and Asn-491 each carry an N-linked (GlcNAc...) asparagine glycan. The helical transmembrane segment at Leu-513–Leu-535 threads the bilayer. The Cytoplasmic segment spans residues Arg-536–Ser-544. Residues Leu-545–Ile-570 traverse the membrane as a helical segment. The Extracellular portion of the chain corresponds to Asp-571–Pro-604. Residues Ala-605–Thr-622 form a helical membrane-spanning segment. Residues Arg-623–Asp-661 lie on the Cytoplasmic side of the membrane. Ser-633 and Ser-634 each carry phosphoserine.

Belongs to the organo anion transporter (TC 2.A.60) family. Highly expressed in brain, liver, and kidney but not expressed in heart, spleen, lung, skeletal muscle, and testis.

Its subcellular location is the cell membrane. It catalyses the reaction estrone 3-sulfate(out) = estrone 3-sulfate(in). The catalysed reaction is taurocholate(out) = taurocholate(in). It carries out the reaction prostaglandin E2(out) = prostaglandin E2(in). The enzyme catalyses L-thyroxine(out) = L-thyroxine(in). Its function is as follows. Mediates the Na(+)-independent transport of organic anions such as taurocholate, cholate, 17-beta-glucuronosyl estradiol, prostaglandin E2, estrone 3-sulfate, L-thyroxine (T4), the cardiac glycosides ouabain and digoxin and thyroid hormones. May play an especially important role in the brain accumulation and toxicity of digoxin and in the hepatobiliary and renal excretion of cardiac glycosides. Shows a pH-sensitive substrate specificity which may be ascribed to the protonation state of the binding site and leads to a stimulation of substrate transport in an acidic microenvironment. Hydrogencarbonate/HCO3(-) acts as the probable counteranion that exchanges for organic anions. The chain is Solute carrier organic anion transporter family member 1A4 (Slco1a4) from Rattus norvegicus (Rat).